The primary structure comprises 458 residues: ATP synthase subunit beta (458 aa).

148–155 (GGAGVGKT) contributes to the ATP binding site.

It belongs to the ATPase alpha/beta chains family. F-type ATPases have 2 components, CF(1) - the catalytic core - and CF(0) - the membrane proton channel. CF(1) has five subunits: alpha(3), beta(3), gamma(1), delta(1), epsilon(1). CF(0) has three main subunits: a(1), b(2) and c(9-12). The alpha and beta chains form an alternating ring which encloses part of the gamma chain. CF(1) is attached to CF(0) by a central stalk formed by the gamma and epsilon chains, while a peripheral stalk is formed by the delta and b chains.

The protein localises to the cell inner membrane. It catalyses the reaction ATP + H2O + 4 H(+)(in) = ADP + phosphate + 5 H(+)(out). Its function is as follows. Produces ATP from ADP in the presence of a proton gradient across the membrane. The catalytic sites are hosted primarily by the beta subunits. The sequence is that of ATP synthase subunit beta from Shewanella piezotolerans (strain WP3 / JCM 13877).